A 104-amino-acid chain; its full sequence is MNTVFEIVSQARRKNKLKRELLDNEKKVRDNRKRVELLENLLDYIKPNMSQDEIMTIIKNMKADYEDRVDDHIIKSAEISKARRDISRRIRELTEEDKQASGKK.

2 coiled-coil regions span residues 13–43 (RKNK…NLLD) and 76–96 (SAEI…LTEE).

Belongs to the pole-localizer TmaR family.

It is found in the cytoplasm. Its function is as follows. Pole-localizer protein involved in the regulation of several cellular processes. This chain is Pole-localizer protein TmaR, found in Vibrio vulnificus (strain CMCP6).